The following is a 244-amino-acid chain: MKVSLFITCLADVFYPDVGRHTVELLERYGCEVEFPEQQTCCGQPAYNSGYHRDTKKVAKHMIETFARAEYVVSPSGSCVAMFHEYEELLKDEPVWQERAKKLVAKTYELSQFLVNVLKVKEVHSSLQAKATYHTSCHMTRLLGETQSPFDLLEKVEGLQLEELPNRETCCGFGGTFSVKMTPISEQMVDEKVRHIEETGADVLIGADCGCLMNIGGRIQRKGKPIKMMHLAEVLNHQERTREE.

Belongs to the LutA/YkgE family.

Functionally, is involved in L-lactate degradation and allows cells to grow with lactate as the sole carbon source. The chain is Lactate utilization protein A from Halalkalibacterium halodurans (strain ATCC BAA-125 / DSM 18197 / FERM 7344 / JCM 9153 / C-125) (Bacillus halodurans).